A 158-amino-acid polypeptide reads, in one-letter code: Cyclic pyranopterin monophosphate synthase (158 aa).

Residues 75–77 (LCH) and 113–114 (ME) each bind substrate. Residue Asp-128 is part of the active site.

Belongs to the MoaC family. Homohexamer; trimer of dimers.

It catalyses the reaction (8S)-3',8-cyclo-7,8-dihydroguanosine 5'-triphosphate = cyclic pyranopterin phosphate + diphosphate. It participates in cofactor biosynthesis; molybdopterin biosynthesis. In terms of biological role, catalyzes the conversion of (8S)-3',8-cyclo-7,8-dihydroguanosine 5'-triphosphate to cyclic pyranopterin monophosphate (cPMP). The sequence is that of Cyclic pyranopterin monophosphate synthase from Paraburkholderia phytofirmans (strain DSM 17436 / LMG 22146 / PsJN) (Burkholderia phytofirmans).